Here is a 54-residue protein sequence, read N- to C-terminus: uncharacterized protein (54 aa).

An N-terminal signal peptide occupies residues 1-23 (MKELIFFLLIIVILFVVFMVVSS).

This is an uncharacterized protein from Acheta domesticus (House cricket).